The chain runs to 318 residues: NADH-ubiquinone oxidoreductase chain 1 (318 aa).

8 helical membrane passes run 2-22, 70-90, 102-122, 147-167, 171-191, 222-242, 253-273, and 294-314; these read FLTN…FLTL, MFLM…IPLP, LLFM…SGWA, AIIL…TLII, YMWL…STLA, LFFL…TILF, ELYT…FLWI, and LPLT…TAAI.

It belongs to the complex I subunit 1 family.

The protein localises to the mitochondrion inner membrane. It catalyses the reaction a ubiquinone + NADH + 5 H(+)(in) = a ubiquinol + NAD(+) + 4 H(+)(out). Functionally, core subunit of the mitochondrial membrane respiratory chain NADH dehydrogenase (Complex I) that is believed to belong to the minimal assembly required for catalysis. Complex I functions in the transfer of electrons from NADH to the respiratory chain. The immediate electron acceptor for the enzyme is believed to be ubiquinone. The polypeptide is NADH-ubiquinone oxidoreductase chain 1 (MT-ND1) (Diaemus youngi (White-winged vampire bat)).